Reading from the N-terminus, the 305-residue chain is Tyrosine recombinase XerC (305 aa).

In terms of domain architecture, Core-binding (CB) spans 4 to 95; it reads TSIQALINKW…AVKNFYRFLE (92 aa). The 183-residue stretch at 116–298 folds into the Tyr recombinase domain; the sequence is LLPKALSEDD…SIKHLEAVYT (183 aa). Catalysis depends on residues R159, K182, H250, R253, and H276. The O-(3'-phospho-DNA)-tyrosine intermediate role is filled by Y285.

The protein belongs to the 'phage' integrase family. XerC subfamily. In terms of assembly, forms a cyclic heterotetrameric complex composed of two molecules of XerC and two molecules of XerD.

Its subcellular location is the cytoplasm. Its function is as follows. Site-specific tyrosine recombinase, which acts by catalyzing the cutting and rejoining of the recombining DNA molecules. The XerC-XerD complex is essential to convert dimers of the bacterial chromosome into monomers to permit their segregation at cell division. It also contributes to the segregational stability of plasmids. The chain is Tyrosine recombinase XerC from Rickettsia massiliae (strain Mtu5).